Reading from the N-terminus, the 154-residue chain is Endoribonuclease YbeY (154 aa).

Zn(2+)-binding residues include His114, His118, and His124.

Belongs to the endoribonuclease YbeY family. Zn(2+) is required as a cofactor.

The protein localises to the cytoplasm. Functionally, single strand-specific metallo-endoribonuclease involved in late-stage 70S ribosome quality control and in maturation of the 3' terminus of the 16S rRNA. This is Endoribonuclease YbeY from Haemophilus influenzae (strain 86-028NP).